Here is a 465-residue protein sequence, read N- to C-terminus: Argininosuccinate lyase (465 aa).

The protein belongs to the lyase 1 family. Argininosuccinate lyase subfamily.

Its subcellular location is the cytoplasm. The catalysed reaction is 2-(N(omega)-L-arginino)succinate = fumarate + L-arginine. It participates in amino-acid biosynthesis; L-arginine biosynthesis; L-arginine from L-ornithine and carbamoyl phosphate: step 3/3. The protein is Argininosuccinate lyase of Clostridium botulinum (strain Eklund 17B / Type B).